The following is a 1226-amino-acid chain: DNA-directed RNA polymerase subunit beta (1226 aa).

Belongs to the RNA polymerase beta chain family. As to quaternary structure, the RNAP catalytic core consists of 2 alpha, 1 beta, 1 beta' and 1 omega subunit. When a sigma factor is associated with the core the holoenzyme is formed, which can initiate transcription.

The catalysed reaction is RNA(n) + a ribonucleoside 5'-triphosphate = RNA(n+1) + diphosphate. Its function is as follows. DNA-dependent RNA polymerase catalyzes the transcription of DNA into RNA using the four ribonucleoside triphosphates as substrates. The protein is DNA-directed RNA polymerase subunit beta of Leptospira interrogans serogroup Icterohaemorrhagiae serovar copenhageni (strain Fiocruz L1-130).